We begin with the raw amino-acid sequence, 594 residues long: UvrABC system protein C (594 aa).

The GIY-YIG domain maps to 13–99; sequence SSSGVYQYFD…IKQLKPKYNI (87 aa). The 36-residue stretch at 205 to 240 folds into the UVR domain; that stretch reads DRLIKELELKMERLSSNLRFEEALIYRDRIAKIQKI.

This sequence belongs to the UvrC family. In terms of assembly, interacts with UvrB in an incision complex.

It is found in the cytoplasm. Functionally, the UvrABC repair system catalyzes the recognition and processing of DNA lesions. UvrC both incises the 5' and 3' sides of the lesion. The N-terminal half is responsible for the 3' incision and the C-terminal half is responsible for the 5' incision. This is UvrABC system protein C from Helicobacter pylori (strain J99 / ATCC 700824) (Campylobacter pylori J99).